The primary structure comprises 120 residues: UPF0102 protein COXBURSA331_A1934 (120 aa).

It belongs to the UPF0102 family.

This chain is UPF0102 protein COXBURSA331_A1934, found in Coxiella burnetii (strain RSA 331 / Henzerling II).